The sequence spans 406 residues: Calsequestrin-1 (406 aa).

The N-terminal stretch at 1–34 (MRATDRMGARAVSKLRLALLFVLVLGTPRSGVQG) is a signal peptide. Position 43 is a phosphotyrosine (tyrosine 43). The residue at position 81 (serine 81) is a Phosphoserine. The residue at position 124 (threonine 124) is a Phosphothreonine. Phosphoserine is present on serine 216. The N-linked (GlcNAc...) asparagine glycan is linked to asparagine 350. Positions 382–406 (EGEINTEDDDDDDDDDDDDDDDDDD) are disordered.

It belongs to the calsequestrin family. As to quaternary structure, monomer; increases in response to a depletion of intracellular calcium. Homodimer. Homotetramer and homopolymer. Can form linear homooligomers. Ca(2+) ions promote oligomerization. Interacts (via C-terminal end and preferentially with the monomeric form) with STIM1; this interaction increases in response to a depletion of intracellular calcium, decreases both STIM1 aggregation and clustering, interaction of STIM1 with ORAI1 and store-operated Ca(2+) entry (SOCE) activity. Interacts with ASPH and TRDN. In terms of processing, N-glycosylated. In terms of tissue distribution, detected in skeletal muscle and in smooth muscle from vas deferens, aorta and stomach (at protein level).

The protein resides in the endoplasmic reticulum. It is found in the sarcoplasmic reticulum. Its subcellular location is the sarcoplasmic reticulum lumen. It localises to the sarcoplasmic reticulum membrane. The protein localises to the mitochondrion matrix. Calsequestrin is a high-capacity, moderate affinity, calcium-binding protein and thus acts as an internal calcium store in muscle. Calcium ions are bound by clusters of acidic residues at the protein surface, often at the interface between subunits. Can bind around 80 Ca(2+) ions. Regulates the release of lumenal Ca(2+) via the calcium release channel RYR1; this plays an important role in triggering muscle contraction. Negatively regulates store-operated Ca(2+) entry (SOCE) activity. This is Calsequestrin-1 (Casq1) from Rattus norvegicus (Rat).